A 1492-amino-acid polypeptide reads, in one-letter code: DNA-directed RNA polymerase subunit beta' (1492 aa).

4 residues coordinate Zn(2+): Cys-67, Cys-69, Cys-82, and Cys-85. Mg(2+)-binding residues include Asp-499, Asp-501, and Asp-503. Zn(2+) is bound by residues Cys-867, Cys-943, Cys-950, and Cys-953.

Belongs to the RNA polymerase beta' chain family. In terms of assembly, the RNAP catalytic core consists of 2 alpha, 1 beta, 1 beta' and 1 omega subunit. When a sigma factor is associated with the core the holoenzyme is formed, which can initiate transcription. Mg(2+) serves as cofactor. It depends on Zn(2+) as a cofactor.

The enzyme catalyses RNA(n) + a ribonucleoside 5'-triphosphate = RNA(n+1) + diphosphate. Its function is as follows. DNA-dependent RNA polymerase catalyzes the transcription of DNA into RNA using the four ribonucleoside triphosphates as substrates. This is DNA-directed RNA polymerase subunit beta' from Chlorobium phaeobacteroides (strain DSM 266 / SMG 266 / 2430).